A 296-amino-acid polypeptide reads, in one-letter code: GTPase Era (296 aa).

The Era-type G domain maps to 3–170 (KSGFITIVGR…LELMVKYLPE (168 aa)). A G1 region spans residues 11-18 (GRPNVGKS). 11 to 18 (GRPNVGKS) contributes to the GTP binding site. Residues 37-41 (QTTRN) are G2. A G3 region spans residues 58–61 (DTPG). GTP-binding positions include 58–62 (DTPGI) and 120–123 (NKVD). A G4 region spans residues 120–123 (NKVD). Positions 149–151 (ISA) are G5. Residues 201-278 (LSQEVPHGIA…NIKIWVKVRK (78 aa)) enclose the KH type-2 domain.

The protein belongs to the TRAFAC class TrmE-Era-EngA-EngB-Septin-like GTPase superfamily. Era GTPase family. In terms of assembly, monomer.

It localises to the cytoplasm. It is found in the cell membrane. Functionally, an essential GTPase that binds both GDP and GTP, with rapid nucleotide exchange. Plays a role in 16S rRNA processing and 30S ribosomal subunit biogenesis and possibly also in cell cycle regulation and energy metabolism. The chain is GTPase Era from Clostridium perfringens (strain 13 / Type A).